Reading from the N-terminus, the 341-residue chain is Putative ubiquitin-like-specific protease 1B (341 aa).

Active-site residues include His-231, Asp-248, and Cys-300.

It belongs to the peptidase C48 family.

In terms of biological role, protease that catalyzes two essential functions in the SUMO pathway: processing of full-length SUMOs to their mature forms and deconjugation of SUMO from targeted proteins. In Arabidopsis thaliana (Mouse-ear cress), this protein is Putative ubiquitin-like-specific protease 1B (ULP1B).